We begin with the raw amino-acid sequence, 310 residues long: Apolipoprotein E (310 aa).

The N-terminal stretch at 1-18 is a signal peptide; it reads MKALWAVLLATLLTGCLS. A run of 8 repeats spans residues 72–93, 94–115, 116–137, 138–159, 160–181, 182–203, 204–225, and 226–247. The interval 72–247 is 8 X 22 AA approximate tandem repeats; sequence VLMEDTMTEV…RLEEMREHME (176 aa). Residue M135 is modified to Methionine sulfoxide. Residues 150–160 are LDL and other lipoprotein receptors binding; the sequence is HLRKMRKRLMR. The LDL receptor binding stretch occupies residues 150–160; sequence HLRKMRKRLMR. Position 154–157 (154–157) interacts with heparin; sequence MRKR. Residues 202-282 are lipid-binding and lipoprotein association; the sequence is TANLGAGVAQ…GWFEPLVEDM (81 aa). Residue 221-228 participates in heparin binding; sequence GDRLRGRL. The tract at residues 258-310 is homooligomerization; that stretch reads QQIRLQAEIFQARLKGWFEPLVEDMQRQLANLVEKIQASTNSVLSTSVPQENQ. Residues 270–282 form a specificity for association with VLDL region; it reads RLKGWFEPLVEDM.

Belongs to the apolipoprotein A1/A4/E family. Homotetramer. May interact with ABCA1; functionally associated with ABCA1 in the biogenesis of HDLs. May interact with APP/A4 amyloid-beta peptide; the interaction is extremely stable in vitro but its physiological significance is unclear. May interact with MAPT. May interact with MAP2. In the cerebrospinal fluid, interacts with secreted SORL1. Interacts with PMEL; this allows the loading of PMEL luminal fragment on ILVs to induce fibril nucleation. APOE exists as multiple glycosylated and sialylated glycoforms within cells and in plasma. The extent of glycosylation and sialylation are tissue and context specific. In terms of processing, glycated in plasma VLDL. Post-translationally, phosphorylated by FAM20C in the extracellular medium.

The protein localises to the secreted. It localises to the extracellular space. It is found in the extracellular matrix. Its subcellular location is the extracellular vesicle. The protein resides in the endosome. The protein localises to the multivesicular body. Its function is as follows. APOE is an apolipoprotein, a protein associating with lipid particles, that mainly functions in lipoprotein-mediated lipid transport between organs via the plasma and interstitial fluids. APOE is a core component of plasma lipoproteins and is involved in their production, conversion and clearance. Apolipoproteins are amphipathic molecules that interact both with lipids of the lipoprotein particle core and the aqueous environment of the plasma. As such, APOE associates with chylomicrons, chylomicron remnants, very low density lipoproteins (VLDL) and intermediate density lipoproteins (IDL) but shows a preferential binding to high-density lipoproteins (HDL). It also binds a wide range of cellular receptors including the LDL receptor/LDLR, the LDL receptor-related proteins LRP1, LRP2 and LRP8 and the very low-density lipoprotein receptor/VLDLR that mediate the cellular uptake of the APOE-containing lipoprotein particles. Finally, APOE also has a heparin-binding activity and binds heparan-sulfate proteoglycans on the surface of cells, a property that supports the capture and the receptor-mediated uptake of APOE-containing lipoproteins by cells. A main function of APOE is to mediate lipoprotein clearance through the uptake of chylomicrons, VLDLs, and HDLs by hepatocytes. APOE is also involved in the biosynthesis by the liver of VLDLs as well as their uptake by peripheral tissues ensuring the delivery of triglycerides and energy storage in muscle, heart and adipose tissues. By participating in the lipoprotein-mediated distribution of lipids among tissues, APOE plays a critical role in plasma and tissues lipid homeostasis. APOE is also involved in two steps of reverse cholesterol transport, the HDLs-mediated transport of cholesterol from peripheral tissues to the liver, and thereby plays an important role in cholesterol homeostasis. First, it is functionally associated with ABCA1 in the biogenesis of HDLs in tissues. Second, it is enriched in circulating HDLs and mediates their uptake by hepatocytes. APOE also plays an important role in lipid transport in the central nervous system, regulating neuron survival and sprouting. This Grammomys surdaster (African woodland thicket rat) protein is Apolipoprotein E (Apoe).